Here is a 163-residue protein sequence, read N- to C-terminus: Ribosome maturation factor RimM (163 aa).

The PRC barrel domain maps to Glu90 to Leu161.

Belongs to the RimM family. As to quaternary structure, binds ribosomal protein uS19.

The protein localises to the cytoplasm. An accessory protein needed during the final step in the assembly of 30S ribosomal subunit, possibly for assembly of the head region. Essential for efficient processing of 16S rRNA. May be needed both before and after RbfA during the maturation of 16S rRNA. It has affinity for free ribosomal 30S subunits but not for 70S ribosomes. This Anaeromyxobacter dehalogenans (strain 2CP-C) protein is Ribosome maturation factor RimM.